Reading from the N-terminus, the 253-residue chain is Glucosamine-6-phosphate deaminase (253 aa).

D65 functions as the Proton acceptor; for enolization step in the catalytic mechanism. N133 serves as the catalytic For ring-opening step. Residue H135 is the Proton acceptor; for ring-opening step of the active site. The active-site For ring-opening step is the E140.

This sequence belongs to the glucosamine/galactosamine-6-phosphate isomerase family. NagB subfamily.

The enzyme catalyses alpha-D-glucosamine 6-phosphate + H2O = beta-D-fructose 6-phosphate + NH4(+). Its pathway is amino-sugar metabolism; N-acetylneuraminate degradation; D-fructose 6-phosphate from N-acetylneuraminate: step 5/5. Functionally, catalyzes the reversible isomerization-deamination of glucosamine 6-phosphate (GlcN6P) to form fructose 6-phosphate (Fru6P) and ammonium ion. This Corynebacterium efficiens (strain DSM 44549 / YS-314 / AJ 12310 / JCM 11189 / NBRC 100395) protein is Glucosamine-6-phosphate deaminase.